The sequence spans 765 residues: Phosphoribosylformylglycinamidine synthase subunit PurL (765 aa).

His57 is a catalytic residue. The ATP site is built by Tyr60 and Arg104. Position 106 (Glu106) interacts with Mg(2+). Substrate contacts are provided by residues 107–110 (SHNH) and Arg129. Catalysis depends on His108, which acts as the Proton acceptor. Asp130 is a binding site for Mg(2+). Residue Gln254 coordinates substrate. A Mg(2+)-binding site is contributed by Asp282. 326–328 (ESQ) serves as a coordination point for substrate. Residues Asn508 and Gly545 each contribute to the ATP site. Position 546 (Asn546) interacts with Mg(2+). Ser548 is a substrate binding site.

Belongs to the FGAMS family. As to quaternary structure, monomer. Part of the FGAM synthase complex composed of 1 PurL, 1 PurQ and 2 PurS subunits.

The protein localises to the cytoplasm. It carries out the reaction N(2)-formyl-N(1)-(5-phospho-beta-D-ribosyl)glycinamide + L-glutamine + ATP + H2O = 2-formamido-N(1)-(5-O-phospho-beta-D-ribosyl)acetamidine + L-glutamate + ADP + phosphate + H(+). Its pathway is purine metabolism; IMP biosynthesis via de novo pathway; 5-amino-1-(5-phospho-D-ribosyl)imidazole from N(2)-formyl-N(1)-(5-phospho-D-ribosyl)glycinamide: step 1/2. In terms of biological role, part of the phosphoribosylformylglycinamidine synthase complex involved in the purines biosynthetic pathway. Catalyzes the ATP-dependent conversion of formylglycinamide ribonucleotide (FGAR) and glutamine to yield formylglycinamidine ribonucleotide (FGAM) and glutamate. The FGAM synthase complex is composed of three subunits. PurQ produces an ammonia molecule by converting glutamine to glutamate. PurL transfers the ammonia molecule to FGAR to form FGAM in an ATP-dependent manner. PurS interacts with PurQ and PurL and is thought to assist in the transfer of the ammonia molecule from PurQ to PurL. This Corynebacterium aurimucosum (strain ATCC 700975 / DSM 44827 / CIP 107346 / CN-1) (Corynebacterium nigricans) protein is Phosphoribosylformylglycinamidine synthase subunit PurL.